A 356-amino-acid chain; its full sequence is HORMA domain-containing protein 1 (356 aa).

The HORMA domain occupies 24-225 (QQSLVLVKKL…TPFHSIKMNV (202 aa)). Disordered stretches follow at residues 282–305 (ETQETQEQPHRHTKEDFSTNPKMD) and 333–356 (QLEFPLSQDPQPSVPKRRKVSVPK). The segment covering 288-298 (EQPHRHTKEDF) has biased composition (basic and acidic residues). Residues 347-356 (PKRRKVSVPK) show a composition bias toward basic residues.

It localises to the nucleus. Its subcellular location is the chromosome. Functionally, plays a key role in meiotic progression by ensuring that sufficient numbers of processed DNA double-strand breaks (DSBs) are available for successful homology search, promoting synaptonemal-complex formation independently and playing key role in the male mid-pachytene checkpoint and the female meiotic prophase checkpoint. This chain is HORMA domain-containing protein 1 (hormad1), found in Danio rerio (Zebrafish).